The following is a 127-amino-acid chain: Large ribosomal subunit protein bL17 (127 aa).

The protein belongs to the bacterial ribosomal protein bL17 family. Part of the 50S ribosomal subunit. Contacts protein L32.

The protein is Large ribosomal subunit protein bL17 of Lactobacillus gasseri (strain ATCC 33323 / DSM 20243 / BCRC 14619 / CIP 102991 / JCM 1131 / KCTC 3163 / NCIMB 11718 / NCTC 13722 / AM63).